The following is a 310-amino-acid chain: HPr kinase/phosphorylase (310 aa).

Residues H136 and K157 contribute to the active site. An ATP-binding site is contributed by 151 to 158 (GDSGIGKS). S158 contributes to the Mg(2+) binding site. D175 functions as the Proton acceptor; for phosphorylation activity. Proton donor; for dephosphorylation activity in the catalytic mechanism. The interval 199-208 (LEIRGLGIIN) is important for the catalytic mechanism of both phosphorylation and dephosphorylation. E200 provides a ligand contact to Mg(2+). R241 is a catalytic residue. Positions 262–267 (PVRPGR) are important for the catalytic mechanism of dephosphorylation.

This sequence belongs to the HPrK/P family. Homohexamer. Requires Mg(2+) as cofactor.

It carries out the reaction [HPr protein]-L-serine + ATP = [HPr protein]-O-phospho-L-serine + ADP + H(+). The enzyme catalyses [HPr protein]-O-phospho-L-serine + phosphate + H(+) = [HPr protein]-L-serine + diphosphate. Catalyzes the ATP- as well as the pyrophosphate-dependent phosphorylation of a specific serine residue in HPr, a phosphocarrier protein of the phosphoenolpyruvate-dependent sugar phosphotransferase system (PTS). HprK/P also catalyzes the pyrophosphate-producing, inorganic phosphate-dependent dephosphorylation (phosphorolysis) of seryl-phosphorylated HPr (P-Ser-HPr). The two antagonistic activities of HprK/P are regulated by several intracellular metabolites, which change their concentration in response to the absence or presence of rapidly metabolisable carbon sources (glucose, fructose, etc.) in the growth medium. Therefore, by controlling the phosphorylation state of HPr, HPrK/P is a sensor enzyme that plays a major role in the regulation of carbon metabolism and sugar transport: it mediates carbon catabolite repression (CCR), and regulates PTS-catalyzed carbohydrate uptake and inducer exclusion. The sequence is that of HPr kinase/phosphorylase from Staphylococcus aureus (strain Mu3 / ATCC 700698).